The chain runs to 71 residues: Translation initiation factor IF-1 (71 aa).

The region spanning 1-71 is the S1-like domain; it reads MAKQSAIEQD…LSKARITYRY (71 aa).

The protein belongs to the IF-1 family. In terms of assembly, component of the 30S ribosomal translation pre-initiation complex which assembles on the 30S ribosome in the order IF-2 and IF-3, IF-1 and N-formylmethionyl-tRNA(fMet); mRNA recruitment can occur at any time during PIC assembly.

It is found in the cytoplasm. In terms of biological role, one of the essential components for the initiation of protein synthesis. Stabilizes the binding of IF-2 and IF-3 on the 30S subunit to which N-formylmethionyl-tRNA(fMet) subsequently binds. Helps modulate mRNA selection, yielding the 30S pre-initiation complex (PIC). Upon addition of the 50S ribosomal subunit IF-1, IF-2 and IF-3 are released leaving the mature 70S translation initiation complex. This Flavobacterium psychrophilum (strain ATCC 49511 / DSM 21280 / CIP 103535 / JIP02/86) protein is Translation initiation factor IF-1.